We begin with the raw amino-acid sequence, 232 residues long: 5'-methylthioadenosine/S-adenosylhomocysteine nucleosidase (232 aa).

E12 acts as the Proton acceptor in catalysis. Residues G78, I152, and M173–E174 contribute to the substrate site. The Proton donor role is filled by D197.

This sequence belongs to the PNP/UDP phosphorylase family. MtnN subfamily. In terms of assembly, homodimer.

The catalysed reaction is S-adenosyl-L-homocysteine + H2O = S-(5-deoxy-D-ribos-5-yl)-L-homocysteine + adenine. It carries out the reaction S-methyl-5'-thioadenosine + H2O = 5-(methylsulfanyl)-D-ribose + adenine. The enzyme catalyses 5'-deoxyadenosine + H2O = 5-deoxy-D-ribose + adenine. Its pathway is amino-acid biosynthesis; L-methionine biosynthesis via salvage pathway; S-methyl-5-thio-alpha-D-ribose 1-phosphate from S-methyl-5'-thioadenosine (hydrolase route): step 1/2. Functionally, catalyzes the irreversible cleavage of the glycosidic bond in both 5'-methylthioadenosine (MTA) and S-adenosylhomocysteine (SAH/AdoHcy) to adenine and the corresponding thioribose, 5'-methylthioribose and S-ribosylhomocysteine, respectively. Also cleaves 5'-deoxyadenosine, a toxic by-product of radical S-adenosylmethionine (SAM) enzymes, into 5-deoxyribose and adenine. Thus, is required for in vivo function of the radical SAM enzymes biotin synthase and lipoic acid synthase, that are inhibited by 5'-deoxyadenosine accumulation. The chain is 5'-methylthioadenosine/S-adenosylhomocysteine nucleosidase from Erwinia tasmaniensis (strain DSM 17950 / CFBP 7177 / CIP 109463 / NCPPB 4357 / Et1/99).